Here is a 471-residue protein sequence, read N- to C-terminus: MVSSQCSVANKNQTGKPFQKHLSLSISPPKSVLGDNLELQFSDVFGPMPEANSEEACDVAYDEPAVVYSRSHSLVGPSLVVSHSLKMNKLTLRETEDSVDLVECVEGESIKENDEFSGNDDTDSEKSPEEVSGVVGIEDFEVLKVVGQGAFGKVYQVRKKDTSEIYAMKVMRKDKIVEKNHAEYMKAERDILTKIDHPFIVQLKYSFQTKYRLYLVLDFINGGHLFFQLYHQGLFREDLARVYTAEIVSAVSHLHEKGIMHRDLKPENILMDVDGHVMLTDFGLAKEFEENTRSNSMCGTTEYMAPEIVRGKGHDKAADWWSVGILLYEMLTGKPPFLGSKGKIQQKIVKDKIKLPQFLSNEAHALLKGLLQKEPERRLGSGPSGAEEIKKHKWFKAINWKKLEAREVQPSFKPAVSGRQCIANFDKCWTDMSVLDSPASSPNSDAKANPFTNFTYVRPPHSFLHRTTSNL.

The segment at 1-21 (MVSSQCSVANKNQTGKPFQKH) is disordered. The 256-residue stretch at 140–395 (FEVLKVVGQG…AEEIKKHKWF (256 aa)) folds into the Protein kinase domain. Residues 146-154 (VGQGAFGKV) and Lys169 each bind ATP. Asp263 acts as the Proton acceptor in catalysis. Residues 281–307 (DFGLAKEFEENTRSNSMCGTTEYMAPE) are activation loop. At Ser296 the chain carries Phosphoserine; by PDPK1. Residues 396-466 (KAINWKKLEA…VRPPHSFLHR (71 aa)) form the AGC-kinase C-terminal domain. A Phosphothreonine; by TOR modification is found at Thr455.

Belongs to the protein kinase superfamily. AGC Ser/Thr protein kinase family. S6 kinase subfamily. As to quaternary structure, interacts with TAP46. Binds to MRF1. Post-translationally, undergoes serine-specific autophosphorylation. Phosphorylated at Thr-455 by TOR.

It carries out the reaction L-seryl-[protein] + ATP = O-phospho-L-seryl-[protein] + ADP + H(+). It catalyses the reaction L-threonyl-[protein] + ATP = O-phospho-L-threonyl-[protein] + ADP + H(+). Activated by PDK1. In terms of biological role, downstream effector of TOR signaling pathway. May be involved in adaptation of plant to cold or high-salt conditions. Mediates the phosphorylation of MRFs (e.g. MRF1). This Arabidopsis thaliana (Mouse-ear cress) protein is Serine/threonine-protein kinase AtPK2/AtPK19 (ATPK2).